Here is a 240-residue protein sequence, read N- to C-terminus: MATLFIADLHLQTEEPAIVAGFLRFLAVEARQADALYILGDLFEAWIGDDDPNPLHREMAVAIKSLVDSGVPCFFIHGNRDFLIGKRFARESGMILLPQEKVLDLYGRNVLIMHGDTLCTDDAGYQAFRAKVHNPWVQRLFLTLPLFIRRRIAARMRAGSKAANSSKSLDIMDVNAQTVVAEMEKHRVQWLVHGHTHRPAVHELSVNDQPAFRVVLGAWHHEGSMVKVTPDNVELIAFPL.

Mn(2+)-binding residues include Asp-8, His-10, Asp-41, Asn-79, and His-114. 79-80 (NR) provides a ligand contact to substrate. The substrate site is built by Asp-122, Ser-160, Asn-164, Lys-167, and His-195. Mn(2+) is bound by residues His-195 and His-197.

The protein belongs to the LpxH family. Requires Mn(2+) as cofactor.

The protein localises to the cell inner membrane. It catalyses the reaction UDP-2-N,3-O-bis[(3R)-3-hydroxytetradecanoyl]-alpha-D-glucosamine + H2O = 2-N,3-O-bis[(3R)-3-hydroxytetradecanoyl]-alpha-D-glucosaminyl 1-phosphate + UMP + 2 H(+). It participates in glycolipid biosynthesis; lipid IV(A) biosynthesis; lipid IV(A) from (3R)-3-hydroxytetradecanoyl-[acyl-carrier-protein] and UDP-N-acetyl-alpha-D-glucosamine: step 4/6. Functionally, hydrolyzes the pyrophosphate bond of UDP-2,3-diacylglucosamine to yield 2,3-diacylglucosamine 1-phosphate (lipid X) and UMP by catalyzing the attack of water at the alpha-P atom. Involved in the biosynthesis of lipid A, a phosphorylated glycolipid that anchors the lipopolysaccharide to the outer membrane of the cell. This Salmonella paratyphi C (strain RKS4594) protein is UDP-2,3-diacylglucosamine hydrolase.